Consider the following 62-residue polypeptide: Large ribosomal subunit protein bL28 (62 aa).

The tract at residues 1–24 (MGKQCFVTGRKASTGNNRSHALNS) is disordered. Over residues 11 to 24 (KASTGNNRSHALNS) the composition is skewed to polar residues.

This sequence belongs to the bacterial ribosomal protein bL28 family.

This is Large ribosomal subunit protein bL28 from Staphylococcus saprophyticus subsp. saprophyticus (strain ATCC 15305 / DSM 20229 / NCIMB 8711 / NCTC 7292 / S-41).